Here is a 442-residue protein sequence, read N- to C-terminus: D-serine dehydratase (442 aa).

N6-(pyridoxal phosphate)lysine is present on Lys118.

This sequence belongs to the serine/threonine dehydratase family. DsdA subfamily. In terms of assembly, monomer. It depends on pyridoxal 5'-phosphate as a cofactor.

The catalysed reaction is D-serine = pyruvate + NH4(+). The chain is D-serine dehydratase from Escherichia fergusonii (strain ATCC 35469 / DSM 13698 / CCUG 18766 / IAM 14443 / JCM 21226 / LMG 7866 / NBRC 102419 / NCTC 12128 / CDC 0568-73).